Consider the following 263-residue polypeptide: MRVIMGTASLGSIWAVFLLPLVFGVPTEEPTFGESVASHLPKNCQRCCDPEDPLSPADTVNAVPPYVLPEVRPYINITILKGDKGDRGPSGTPGKPGKNGTRGDRGSQGIKGDKGQAGSPGSSCQTHYSAFSVGRKTGLHSSENFLSLLFDRVFVNTDGHFDMATGRFVAPLRGLYFFSLNVHSWNYKETYVHIVHNEQAVVILYAQPSERSIMQSQSVMLPLVPGDYVWVRLFKRERENGIYSDDMDTYITFSGHLIKAEDN.

An N-terminal signal peptide occupies residues 1–24 (MRVIMGTASLGSIWAVFLLPLVFG). Residue asparagine 76 is glycosylated (N-linked (GlcNAc...) asparagine). The segment at 80-123 (LKGDKGDRGPSGTPGKPGKNGTRGDRGSQGIKGDKGQAGSPGSS) is disordered. The Collagen-like domain maps to 82 to 123 (GDKGDRGPSGTPGKPGKNGTRGDRGSQGIKGDKGQAGSPGSS). The C1q domain occupies 124-263 (CQTHYSAFSV…SGHLIKAEDN (140 aa)).

It localises to the secreted. This is Complement C1q tumor necrosis factor-related protein 6 (C1qtnf6) from Rattus norvegicus (Rat).